The primary structure comprises 688 residues: G-protein coupled receptor-associated protein LMBRD2 (688 aa).

The Extracellular portion of the chain corresponds to 1-3; it reads MSG. A helical membrane pass occupies residues 4 to 21; that stretch reads AALGLEIVFVFFLALFLL. The Cytoplasmic segment spans residues 22-32; sequence HRYGDFKKQHR. Residues 33–53 traverse the membrane as a helical segment; it reads LVIIATLLAWYLCFLIVFILP. Over 54–99 the chain is Extracellular; that stretch reads LDVSTTIYNRCKLAVNSSPAESNSSFVTLAPSKQQCFKPWSYIPNG. A glycan (N-linked (GlcNAc...) asparagine) is linked at Asn-76. The helical transmembrane segment at 100-120 threads the bilayer; that stretch reads IMPIFWRVVYWTSQFLTWILL. Residues 121-144 are Cytoplasmic-facing; that stretch reads PFMQSYARSGGFSITGKIKTALIE. The helical transmembrane segment at 145–165 threads the bilayer; the sequence is NAIYYGTYLLIFGAFLIYVAV. Topologically, residues 166-180 are extracellular; that stretch reads NPKFNLQWNQLQTIG. The chain crosses the membrane as a helical span at residues 181 to 201; that stretch reads IAAANTWGLFLLVLLLGYGLV. Over 202-381 the chain is Cytoplasmic; sequence EIPRSHWNGA…ECLLRPWFYR (180 aa). Positions 222–254 form a coiled coil; sequence FKAAKLMTEKADAEENLEDIMEEVRKVSESIKY. Residues 382-402 form a helical membrane-spanning segment; sequence VLAVVLAAFSVIVVWSECTFF. Over 403 to 426 the chain is Extracellular; that stretch reads STRPVLSLVAVFIQLAEKTYNYIY. A helical membrane pass occupies residues 427-447; the sequence is IEMACFLTIFFLSICVYSTVF. Over 448-467 the chain is Cytoplasmic; it reads RIRVFNYYYLASHHQTDAYS. The helical transmembrane segment at 468-488 threads the bilayer; it reads LLFSGMLFCRLTPPLCLNFLG. Residues 489-515 lie on the Extracellular side of the membrane; that stretch reads LTHMDATISHTDAQPTAYTSIMGSMKV. A helical membrane pass occupies residues 516-536; it reads LSFIADGFYIYYPMLVVILCI. At 537-688 the chain is on the cytoplasmic side; that stretch reads ATYFSLGTRC…MSRSRIFEDV (152 aa). Residues 600-617 show a composition bias toward basic and acidic residues; the sequence is REDSTRNRVVHTEQKESS. The segment at 600-673 is disordered; it reads REDSTRNRVV…ESDSGRYQPG (74 aa). The segment covering 618-634 has biased composition (polar residues); that stretch reads FSETNTNRPLSKYTRTN. A compositionally biased stretch (basic and acidic residues) spans 635–644; it reads GRTERDRIEL.

Belongs to the LIMR family.

The protein localises to the cell membrane. In terms of biological role, may associate with G-protein coupled receptors and regulate downstream signaling pathways. This is G-protein coupled receptor-associated protein LMBRD2 from Gallus gallus (Chicken).